The sequence spans 332 residues: Phosphate acyltransferase (332 aa).

It belongs to the PlsX family. In terms of assembly, homodimer. Probably interacts with PlsY.

It localises to the cytoplasm. The catalysed reaction is a fatty acyl-[ACP] + phosphate = an acyl phosphate + holo-[ACP]. It functions in the pathway lipid metabolism; phospholipid metabolism. In terms of biological role, catalyzes the reversible formation of acyl-phosphate (acyl-PO(4)) from acyl-[acyl-carrier-protein] (acyl-ACP). This enzyme utilizes acyl-ACP as fatty acyl donor, but not acyl-CoA. This is Phosphate acyltransferase from Nitratiruptor sp. (strain SB155-2).